The primary structure comprises 264 residues: Acetylglutamate kinase (264 aa).

Residues 40–41, Arg-62, and Asn-158 contribute to the substrate site; that span reads GG.

This sequence belongs to the acetylglutamate kinase family. ArgB subfamily.

The protein localises to the cytoplasm. The enzyme catalyses N-acetyl-L-glutamate + ATP = N-acetyl-L-glutamyl 5-phosphate + ADP. Its pathway is amino-acid biosynthesis; L-arginine biosynthesis; N(2)-acetyl-L-ornithine from L-glutamate: step 2/4. In terms of biological role, catalyzes the ATP-dependent phosphorylation of N-acetyl-L-glutamate. This is Acetylglutamate kinase from Cytophaga hutchinsonii (strain ATCC 33406 / DSM 1761 / CIP 103989 / NBRC 15051 / NCIMB 9469 / D465).